The sequence spans 362 residues: N-acylethanolamine-hydrolyzing acid amidase (362 aa).

Residues 1 to 33 (MGTLATRAACHGAHLALALLLLLSLSGPWLSAV) form the signal peptide. 2 N-linked (GlcNAc...) asparagine glycosylation sites follow: Asn-42 and Asn-112. Cys-131 acts as the Nucleophile in catalysis. 2 N-linked (GlcNAc...) asparagine glycosylation sites follow: Asn-314 and Asn-338.

Belongs to the acid ceramidase family. In terms of assembly, heterodimer of an alpha and a beta subunit, produced by autocatalytic cleavage. In terms of processing, N-glycosylated. Tunicamycin treatment causes a reduction in specific activity against N-palmitoylethanolamine. Post-translationally, autoproteolytic cleavage at pH 4.5 gives rise to the alpha and beta subunit. Cleavage gives rise to a conformation change that activates the enzyme. The same catalytic Cys residue mediates the autoproteolytic cleavage and subsequent hydrolysis of lipid substrates.

It localises to the lysosome. The protein localises to the membrane. It carries out the reaction N-hexadecanoylethanolamine + H2O = ethanolamine + hexadecanoate. The catalysed reaction is an N-(long-chain fatty acyl)ethanolamine + H2O = a long-chain fatty acid + ethanolamine. The enzyme catalyses N-dodecanoylethanolamine + H2O = dodecanoate + ethanolamine. It catalyses the reaction N-tetradecanoylethanolamine + H2O = tetradecanoate + ethanolamine. It carries out the reaction an N-acylsphing-4-enine + H2O = sphing-4-enine + a fatty acid. The catalysed reaction is N-hexadecanoylsphing-4-enine + H2O = sphing-4-enine + hexadecanoate. The enzyme catalyses N-dodecanoylsphing-4-enine + H2O = dodecanoate + sphing-4-enine. The protein operates within lipid metabolism; fatty acid metabolism. Its function is as follows. Degrades bioactive fatty acid amides to their corresponding acids, with the following preference: N-palmitoylethanolamine &gt; N-myristoylethanolamine &gt; N-stearoylethanolamine &gt; N-oleoylethanolamine &gt; N-linoleoylethanolamine &gt; N-arachidonoylethanolamine. This chain is N-acylethanolamine-hydrolyzing acid amidase, found in Mus musculus (Mouse).